Consider the following 287-residue polypeptide: Protease HtpX (287 aa).

2 helical membrane-spanning segments follow: residues 4–24 (IFLL…VMSI) and 33–53 (GGLL…SLAI). His-139 is a Zn(2+) binding site. The active site involves Glu-140. Residue His-143 coordinates Zn(2+). 2 consecutive transmembrane segments (helical) span residues 154 to 174 (LIQG…AGII) and 195 to 215 (AVVF…VAYF). Glu-220 is a binding site for Zn(2+).

The protein belongs to the peptidase M48B family. Zn(2+) is required as a cofactor.

It is found in the cell inner membrane. In Shewanella putrefaciens (strain CN-32 / ATCC BAA-453), this protein is Protease HtpX.